Consider the following 280-residue polypeptide: Pantothenate synthetase (280 aa).

Position 31-38 (31-38 (MGNLHVGH)) interacts with ATP. Catalysis depends on histidine 38, which acts as the Proton donor. Glutamine 62 provides a ligand contact to (R)-pantoate. Glutamine 62 contributes to the beta-alanine binding site. An ATP-binding site is contributed by 150–153 (GKKD). Position 156 (glutamine 156) interacts with (R)-pantoate. ATP contacts are provided by residues valine 179 and 187–190 (MSSR).

It belongs to the pantothenate synthetase family. As to quaternary structure, homodimer.

Its subcellular location is the cytoplasm. The catalysed reaction is (R)-pantoate + beta-alanine + ATP = (R)-pantothenate + AMP + diphosphate + H(+). It participates in cofactor biosynthesis; (R)-pantothenate biosynthesis; (R)-pantothenate from (R)-pantoate and beta-alanine: step 1/1. Functionally, catalyzes the condensation of pantoate with beta-alanine in an ATP-dependent reaction via a pantoyl-adenylate intermediate. The polypeptide is Pantothenate synthetase (Xanthomonas oryzae pv. oryzae (strain MAFF 311018)).